Reading from the N-terminus, the 706-residue chain is Envelope glycoprotein H (706 aa).

An N-terminal signal peptide occupies residues 1 to 18; it reads MQLLCVFCLVLLWEVGAA. Residues 19-682 are Virion surface-facing; sequence SLSEVKLHLD…LYEERAHVVL (664 aa). Asparagine 60 is a glycosylation site (N-linked (GlcNAc...) asparagine; by host). Intrachain disulfides connect cysteine 120–cysteine 312 and cysteine 278–cysteine 335. Residues 165 to 229 are interaction with gL; it reads DKFQYTGAMT…QSGDYSLVIV (65 aa). N-linked (GlcNAc...) asparagine; by host glycosylation is present at asparagine 435. 2 disulfides stabilise this stretch: cysteine 454–cysteine 478 and cysteine 534–cysteine 587. 2 N-linked (GlcNAc...) asparagine; by host glycosylation sites follow: asparagine 549 and asparagine 604. Cysteines 612 and 615 form a disulfide. Asparagine 664 is a glycosylation site (N-linked (GlcNAc...) asparagine; by host). Residues 683–703 form a helical membrane-spanning segment; it reads AIILYFIAFALGIFLVHKIVM. Residues 704 to 706 are Intravirion-facing; that stretch reads FFL.

This sequence belongs to the herpesviridae glycoprotein H family. As to quaternary structure, interacts with glycoprotein L (gL); this interaction is necessary for the correct processing and cell surface expression of gH. The heterodimer gH/gL seems to interact with gB trimers during fusion. The heterodimer gH/gL interacts with host EPHA2 to facilitate virus internalization and fusion. Interacts with glycoprotein 42/BZLF2. Post-translationally, N-glycosylated, O-glycosylated, and sialylated.

Its subcellular location is the virion membrane. The protein localises to the host cell membrane. It is found in the host endosome membrane. Functionally, the heterodimer glycoprotein H-glycoprotein L is required for the fusion of viral and plasma membranes leading to virus entry into the host cell. Following initial binding to host receptor, membrane fusion is mediated by the fusion machinery composed of gB and the heterodimer gH/gL. May also be involved in the fusion between the virion envelope and the outer nuclear membrane during virion morphogenesis. The heterodimer gH/gL targets also host EPHA2 to promote viral entry. In Homo sapiens (Human), this protein is Envelope glycoprotein H.